A 76-amino-acid chain; its full sequence is Kappa-actitoxin-Avd4c (76 aa).

Residues 1 to 19 (MNKALFLCLVVLCAAVVFA) form the signal peptide. Positions 20–31 (AEDLQKAKHAPF) are excised as a propeptide. 3 cysteine pairs are disulfide-bonded: Cys37-Cys72, Cys39-Cys65, and Cys55-Cys73.

Belongs to the sea anemone type 3 (BDS) potassium channel toxin family. In terms of tissue distribution, moderately expressed in the ectodermal tissue from the distal and proximal tentacles, body wall, and oral disk.

The protein localises to the secreted. The protein resides in the nematocyst. Its function is as follows. Blocks Kv3 voltage-gated potassium channels. Reduces blood pressure. This is Kappa-actitoxin-Avd4c from Anemonia viridis (Snakelocks anemone).